The primary structure comprises 174 residues: Small ribosomal subunit protein uS5 (174 aa).

The S5 DRBM domain occupies 16 to 79; the sequence is LSELLVSVRR…NAAKKSMIRV (64 aa).

Belongs to the universal ribosomal protein uS5 family. Part of the 30S ribosomal subunit. Contacts proteins S4 and S8.

With S4 and S12 plays an important role in translational accuracy. Functionally, located at the back of the 30S subunit body where it stabilizes the conformation of the head with respect to the body. This is Small ribosomal subunit protein uS5 from Anaplasma marginale (strain Florida).